Here is a 369-residue protein sequence, read N- to C-terminus: Mycofactocin maturase MftC (369 aa).

In terms of domain architecture, Radical SAM core spans 16–232 (LDAPICLTWE…KGERVLTGDS (217 aa)). The [4Fe-4S] cluster site is built by Cys-30, Cys-34, Cys-37, Cys-251, Cys-258, Cys-269, Cys-310, Cys-313, Cys-319, Cys-323, and Cys-341. Positions 347-369 (APALAQERHAPRPRVDHSRGSRE) are disordered. Residues 352–369 (QERHAPRPRVDHSRGSRE) show a composition bias toward basic and acidic residues.

This sequence belongs to the radical SAM superfamily. MftC family. As to quaternary structure, interacts with MftB. The cofactor is [4Fe-4S] cluster.

It catalyses the reaction [mycofactocin precursor peptide]-C-terminal glycyl-L-valyl-L-tyrosine + S-adenosyl-L-methionine = [mycofactocin precursor peptide]-C-terminal glycyl-N-{[2-(4-hydroxyphenyl)ethenyl]-3-methylbutanamide} + 5'-deoxyadenosine + L-methionine + CO2. The enzyme catalyses [mycofactocin precursor peptide]-C-terminal glycyl-N-{[2-(4-hydroxyphenyl)ethenyl]-3-methylbutanamide} + AH2 + S-adenosyl-L-methionine = [mycofactocin precursor peptide]-C-terminal glycyl-N-{5-[(4-hydroxyphenyl)methyl]-4,4-dimethyl-2-oxopyrrolidin-3-yl}acetamide + 5'-deoxyadenosine + L-methionine + A + H(+). Functionally, radical S-adenosylmethionine (SAM) enzyme responsible for the first step of the biosynthesis of the enzyme cofactor mycofactocin (MFT). Catalyzes two reactions at the C-terminus of the mycofactocin precursor (the MftA peptide). The first one is the oxidative decarboxylation of the C-terminal L-tyrosine of MftA, forming an unsaturated tyramine moiety. The second reaction is the cross-linking of the tyramine with the penultimate L-valine residue, forming a five-membered lactam ring. Its activity requires the presence of the MftB chaperone. This Mycobacterium ulcerans (strain Agy99) protein is Mycofactocin maturase MftC.